A 338-amino-acid polypeptide reads, in one-letter code: Ketol-acid reductoisomerase (NADP(+)) (338 aa).

The region spanning 1–181 (MNVFYDKDAD…GGGRAGIIET (181 aa)) is the KARI N-terminal Rossmann domain. NADP(+)-binding positions include 24-27 (YGSQ), Arg47, and Ser52. Residue His107 is part of the active site. Position 133 (Gly133) interacts with NADP(+). The 146-residue stretch at 182–327 (NFREETETDL…AKLRAMMPWI (146 aa)) folds into the KARI C-terminal knotted domain. Mg(2+) is bound by residues Asp190, Glu194, Glu226, and Glu230. Position 251 (Ser251) interacts with substrate.

The protein belongs to the ketol-acid reductoisomerase family. Mg(2+) is required as a cofactor.

It catalyses the reaction (2R)-2,3-dihydroxy-3-methylbutanoate + NADP(+) = (2S)-2-acetolactate + NADPH + H(+). It carries out the reaction (2R,3R)-2,3-dihydroxy-3-methylpentanoate + NADP(+) = (S)-2-ethyl-2-hydroxy-3-oxobutanoate + NADPH + H(+). It participates in amino-acid biosynthesis; L-isoleucine biosynthesis; L-isoleucine from 2-oxobutanoate: step 2/4. It functions in the pathway amino-acid biosynthesis; L-valine biosynthesis; L-valine from pyruvate: step 2/4. Functionally, involved in the biosynthesis of branched-chain amino acids (BCAA). Catalyzes an alkyl-migration followed by a ketol-acid reduction of (S)-2-acetolactate (S2AL) to yield (R)-2,3-dihydroxy-isovalerate. In the isomerase reaction, S2AL is rearranged via a Mg-dependent methyl migration to produce 3-hydroxy-3-methyl-2-ketobutyrate (HMKB). In the reductase reaction, this 2-ketoacid undergoes a metal-dependent reduction by NADPH to yield (R)-2,3-dihydroxy-isovalerate. The chain is Ketol-acid reductoisomerase (NADP(+)) from Burkholderia lata (strain ATCC 17760 / DSM 23089 / LMG 22485 / NCIMB 9086 / R18194 / 383).